The following is a 611-amino-acid chain: Chloroplast sensor kinase, chloroplastic (611 aa).

A chloroplast-targeting transit peptide spans 1–79; that stretch reads MLLSAIASQT…PGGGETMVAS (79 aa). The disordered stretch occupies residues 17-50; it reads NLHFSNSIPNPRPSNPSLKLLNASSSSSSSSSSS. Low complexity predominate over residues 40–50; it reads SSSSSSSSSSS. Residues 116–300 are GAF; that stretch reads DFQRLCLEQL…VMDQKTMLLQ (185 aa). Cys-121 serves as a coordination point for [3Fe-4S] cluster. Ser-188 is subject to Phosphoserine. Positions 312–602 constitute a Histidine kinase domain; it reads KLVEQIRGPL…RVELWLPAFP (291 aa). Positions 345–380 form a coiled coil; sequence VEDLIVQGDQIKDTLEELQDAVHLTKANIVRHNEEA. Positions 385 to 402 are enriched in basic and acidic residues; it reads NKTHNETRRSKYEHKDPI. Positions 385–420 are disordered; that stretch reads NKTHNETRRSKYEHKDPIDGSQISSTRLSLGSGLDD.

It belongs to the chloroplast sensor kinase protein family. Self-interacts. Interacts with the plastoquinone analog 2,5-dibromo-3-methyl-5-isopropyl-p-benzoquinone (DBMIB) and with SIGA/SIG1. [3Fe-4S] cluster is required as a cofactor. Post-translationally, autophosphorylated, possibly on tyrosine residues, in photosystem I (PS I) light and in the presence of manganese ions Mn(2+), to a lesser degree, in the presence of calcium ions Ca(2+), but not in the presence of magnesium ions Mg(2+). Dithiothreitol (DTT) stimulates autophosphorylation. Phosphorylated on Ser-188 in vivo after exposure to far-red light (when plastoquinone (PQ) is oxidized). Not phosphorylated under orange light (reduces PQ).

It is found in the plastid. Its subcellular location is the chloroplast stroma. The enzyme catalyses L-tyrosyl-[protein] + ATP = O-phospho-L-tyrosyl-[protein] + ADP + H(+). Its function is as follows. Sensor kinase that senses the plastoquinone (PQ) redox state involved in stoichiometry adjustment of both photosystems (e.g. long-term adaptation via transcriptional regulation of reaction center genes of photosystems I and II) and state transitions (e.g. short-term adaptation involving reversible post-translational phosphorylation of light-harvesting complex II, LHC II), thus linking photosynthesis with gene expression in chloroplasts. Autophosphorylates, probably on a tyrosine residue. Probably phosphorylates SIGA/SIG1 in response to plastoquinone redox state modification. Reduced PQ suppresses its autophosphorylation activity. Represses expression of a number of chloroplast-encoded genes. The protein is Chloroplast sensor kinase, chloroplastic of Arabidopsis thaliana (Mouse-ear cress).